The chain runs to 142 residues: Phosphoribosyl-AMP cyclohydrolase (142 aa).

Asp-85 contributes to the Mg(2+) binding site. Cys-86 lines the Zn(2+) pocket. 2 residues coordinate Mg(2+): Asp-87 and Asp-89. Residues Cys-102 and Cys-109 each coordinate Zn(2+). Positions 120 to 142 are disordered; that stretch reads GEPPTPVGAGERQPASGTADAAP.

This sequence belongs to the PRA-CH family. As to quaternary structure, homodimer. The cofactor is Mg(2+). Requires Zn(2+) as cofactor.

It is found in the cytoplasm. The enzyme catalyses 1-(5-phospho-beta-D-ribosyl)-5'-AMP + H2O = 1-(5-phospho-beta-D-ribosyl)-5-[(5-phospho-beta-D-ribosylamino)methylideneamino]imidazole-4-carboxamide. Its pathway is amino-acid biosynthesis; L-histidine biosynthesis; L-histidine from 5-phospho-alpha-D-ribose 1-diphosphate: step 3/9. Functionally, catalyzes the hydrolysis of the adenine ring of phosphoribosyl-AMP. The sequence is that of Phosphoribosyl-AMP cyclohydrolase from Acidothermus cellulolyticus (strain ATCC 43068 / DSM 8971 / 11B).